Reading from the N-terminus, the 180-residue chain is Crossover junction endodeoxyribonuclease RuvC (180 aa).

Catalysis depends on residues D9, E74, and D146. D9, E74, and D146 together coordinate Mg(2+).

This sequence belongs to the RuvC family. Homodimer which binds Holliday junction (HJ) DNA. The HJ becomes 2-fold symmetrical on binding to RuvC with unstacked arms; it has a different conformation from HJ DNA in complex with RuvA. In the full resolvosome a probable DNA-RuvA(4)-RuvB(12)-RuvC(2) complex forms which resolves the HJ. Requires Mg(2+) as cofactor.

The protein localises to the cytoplasm. It carries out the reaction Endonucleolytic cleavage at a junction such as a reciprocal single-stranded crossover between two homologous DNA duplexes (Holliday junction).. In terms of biological role, the RuvA-RuvB-RuvC complex processes Holliday junction (HJ) DNA during genetic recombination and DNA repair. Endonuclease that resolves HJ intermediates. Cleaves cruciform DNA by making single-stranded nicks across the HJ at symmetrical positions within the homologous arms, yielding a 5'-phosphate and a 3'-hydroxyl group; requires a central core of homology in the junction. The consensus cleavage sequence is 5'-(A/T)TT(C/G)-3'. Cleavage occurs on the 3'-side of the TT dinucleotide at the point of strand exchange. HJ branch migration catalyzed by RuvA-RuvB allows RuvC to scan DNA until it finds its consensus sequence, where it cleaves and resolves the cruciform DNA. In Methylobacillus flagellatus (strain ATCC 51484 / DSM 6875 / VKM B-1610 / KT), this protein is Crossover junction endodeoxyribonuclease RuvC.